We begin with the raw amino-acid sequence, 513 residues long: ATP synthase subunit alpha 2 (513 aa).

169–176 contacts ATP; that stretch reads GDRQTGKT.

Belongs to the ATPase alpha/beta chains family. In terms of assembly, F-type ATPases have 2 components, CF(1) - the catalytic core - and CF(0) - the membrane proton channel. CF(1) has five subunits: alpha(3), beta(3), gamma(1), delta(1), epsilon(1). CF(0) has three main subunits: a(1), b(2) and c(9-12). The alpha and beta chains form an alternating ring which encloses part of the gamma chain. CF(1) is attached to CF(0) by a central stalk formed by the gamma and epsilon chains, while a peripheral stalk is formed by the delta and b chains.

The protein resides in the cell inner membrane. It catalyses the reaction ATP + H2O + 4 H(+)(in) = ADP + phosphate + 5 H(+)(out). Functionally, produces ATP from ADP in the presence of a proton gradient across the membrane. The alpha chain is a regulatory subunit. The chain is ATP synthase subunit alpha 2 from Shewanella frigidimarina (strain NCIMB 400).